The following is a 112-amino-acid chain: UPF0482 protein Ent638_1930 (112 aa).

The N-terminal stretch at 1–27 (MTTLRKRLCLATLLSLTALAFTAPVSA) is a signal peptide.

It belongs to the UPF0482 family.

The sequence is that of UPF0482 protein Ent638_1930 from Enterobacter sp. (strain 638).